Reading from the N-terminus, the 186-residue chain is Ribosome-recycling factor (186 aa).

This sequence belongs to the RRF family.

It is found in the cytoplasm. Its function is as follows. Responsible for the release of ribosomes from messenger RNA at the termination of protein biosynthesis. May increase the efficiency of translation by recycling ribosomes from one round of translation to another. The protein is Ribosome-recycling factor of Chlorobium limicola (strain DSM 245 / NBRC 103803 / 6330).